The sequence spans 623 residues: Glutathione import ATP-binding protein GsiA (623 aa).

2 ABC transporter domains span residues 15-269 (VSGL…QTLL) and 325-564 (LRSG…RKLM). Residues 49–56 (GESGSGKS) and 357–364 (GESGSGKS) contribute to the ATP site.

It belongs to the ABC transporter superfamily. Glutathione importer (TC 3.A.1.5.11) family. The complex is composed of two ATP-binding proteins (GsiA), two transmembrane proteins (GsiC and GsiD) and a solute-binding protein (GsiB).

Its subcellular location is the cell inner membrane. It carries out the reaction glutathione(out) + ATP + H2O = glutathione(in) + ADP + phosphate + H(+). Part of the ABC transporter complex GsiABCD involved in glutathione import. Responsible for energy coupling to the transport system. In Salmonella paratyphi A (strain ATCC 9150 / SARB42), this protein is Glutathione import ATP-binding protein GsiA.